The following is a 624-amino-acid chain: Carbon monoxide dehydrogenase (624 aa).

5 residues coordinate [4Fe-4S] cluster: C37, C46, C49, C54, and C65. Residues H256, C292, C336, C444, C475, and C516 each contribute to the [Ni-4Fe-5S] cluster site.

It belongs to the Ni-containing carbon monoxide dehydrogenase family. Homodimer. [4Fe-4S] cluster is required as a cofactor. The cofactor is [Ni-4Fe-5S] cluster.

The catalysed reaction is CO + 2 oxidized [2Fe-2S]-[ferredoxin] + H2O = 2 reduced [2Fe-2S]-[ferredoxin] + CO2 + 2 H(+). Functionally, CODH oxidizes carbon monoxide coupled, via CooF, to the reduction of a hydrogen cation by a hydrogenase (possibly CooH). The sequence is that of Carbon monoxide dehydrogenase (cooS) from Methanocaldococcus jannaschii (strain ATCC 43067 / DSM 2661 / JAL-1 / JCM 10045 / NBRC 100440) (Methanococcus jannaschii).